The primary structure comprises 473 residues: Nuclear distribution protein PAC1 (473 aa).

The LisH domain occupies 9–41 (QAEELHKSIIAYFLSAKLPKSAAALREEIADSV). Residues 60–87 (TSVVRLQKKIMDLEARNSALQSELDSAT) adopt a coiled-coil conformation. Residues 80–93 (QSELDSATPTSLSR) show a composition bias toward polar residues. The interval 80-99 (QSELDSATPTSLSRRNQDPV) is disordered. 8 WD repeats span residues 113-154 (SHRN…RTIK), 156-196 (HTRA…KNIR), 200-247 (GHDH…CVRT), 250-289 (GHVE…TKST), 292-352 (GHEH…IKTL), 354-393 (GHDN…KCVR), 397-434 (DAHA…ALSG), and 435-472 (VNGI…RVFA).

This sequence belongs to the WD repeat LIS1/nudF family. As to quaternary structure, self-associates. Interacts with NDL1 and dynein.

The protein resides in the cytoplasm. Its subcellular location is the cytoskeleton. It is found in the spindle pole. Positively regulates the activity of the minus-end directed microtubule motor protein dynein. May enhance dynein-mediated microtubule sliding by targeting dynein to the microtubule plus end. Required for nuclear migration during vegetative growth as well as development. Required for retrograde early endosome (EE) transport from the hyphal tip. Required for localization of dynein to the mitotic spindle poles. Recruits additional proteins to the dynein complex at SPBs. The polypeptide is Nuclear distribution protein PAC1 (Ajellomyces dermatitidis (strain ER-3 / ATCC MYA-2586) (Blastomyces dermatitidis)).